Here is a 201-residue protein sequence, read N- to C-terminus: Guanylate kinase (201 aa).

Positions 7–186 (GVLLVLSSPS…SVEEISSILN (180 aa)) constitute a Guanylate kinase-like domain. ATP is bound at residue 14-21 (SPSGAGKT).

Belongs to the guanylate kinase family.

Its subcellular location is the cytoplasm. It catalyses the reaction GMP + ATP = GDP + ADP. Functionally, essential for recycling GMP and indirectly, cGMP. The polypeptide is Guanylate kinase (Wolbachia pipientis wMel).